A 199-amino-acid polypeptide reads, in one-letter code: uncharacterized protein (199 aa).

Residues 7–27 (FWFWLILGIIALFIIVKAIVI) traverse the membrane as a helical segment.

It belongs to the band 7/mec-2 family.

It localises to the membrane. This is an uncharacterized protein from Methanocaldococcus jannaschii (strain ATCC 43067 / DSM 2661 / JAL-1 / JCM 10045 / NBRC 100440) (Methanococcus jannaschii).